We begin with the raw amino-acid sequence, 136 residues long: Transcription antitermination protein NusB (136 aa).

This sequence belongs to the NusB family.

Functionally, involved in transcription antitermination. Required for transcription of ribosomal RNA (rRNA) genes. Binds specifically to the boxA antiterminator sequence of the ribosomal RNA (rrn) operons. This Treponema denticola (strain ATCC 35405 / DSM 14222 / CIP 103919 / JCM 8153 / KCTC 15104) protein is Transcription antitermination protein NusB.